Reading from the N-terminus, the 210-residue chain is uncharacterized protein (210 aa).

This is an uncharacterized protein from Nostoc sp. (strain PCC 7120 / SAG 25.82 / UTEX 2576).